Consider the following 412-residue polypeptide: Putative competence-damage inducible protein (412 aa).

It belongs to the CinA family.

In Bacillus cereus (strain B4264), this protein is Putative competence-damage inducible protein.